A 60-amino-acid chain; its full sequence is Large ribosomal subunit protein bL32 (60 aa).

A disordered region spans residues 1–47 (MAVQQNRKTRSKRGMRRSHDALTSSTLSTDPTTGEKHRRHHVTADGF). Residues 7–16 (RKTRSKRGMR) are compositionally biased toward basic residues.

It belongs to the bacterial ribosomal protein bL32 family.

In Teredinibacter turnerae (strain ATCC 39867 / T7901), this protein is Large ribosomal subunit protein bL32.